The chain runs to 166 residues: Mitochondrial fission process protein 1 (166 aa).

The next 2 helical transmembrane spans lie at 34 to 54 (SLVP…YVLA) and 78 to 98 (ALAV…IPGF). Residue Lys-123 is modified to N6-succinyllysine. A helical transmembrane segment spans residues 129–149 (LGLLAIPVIIHPIDRSVDFLL).

This sequence belongs to the MTFP1 family.

Its subcellular location is the mitochondrion inner membrane. Functionally, involved in the mitochondrial division probably by regulating membrane fission. Loss-of-function leads to apoptosis. The chain is Mitochondrial fission process protein 1 (Mtfp1) from Mus musculus (Mouse).